Consider the following 261-residue polypeptide: Chloroplastic import inner membrane translocase subunit HP30-1 (261 aa).

4 helical membrane passes run 59–77, 113–129, 139–155, and 163–180; these read AAVVSTMSGVQGAFIGGLM, NFAAITGVNAGIASVMK, SAVVAALGSGFAYSLVS, and MNAITTAAGFAVFQGVFF.

Belongs to the Tim17/Tim22/Tim23 family. Probable component of a protein-conducting channel made of HP30-1, HP30-2 and HP20 that mediates the import of transit sequence-less proteins into the chloroplastic inner membrane. Interacts with CEQORH.

It is found in the plastid. The protein localises to the chloroplast inner membrane. In terms of biological role, together with HP30-2 and HP20, triggers the import and insertion of transit sequence-less multi-pass transmembrane proteins (e.g. CEQORH) into the chloroplastic inner membrane. The chain is Chloroplastic import inner membrane translocase subunit HP30-1 from Arabidopsis thaliana (Mouse-ear cress).